The following is a 160-amino-acid chain: MDPQPGDQAQQPPPPTLTHPRFTLELEFVSSLANPYYLSHLAVNYPNLLGINKSGDDNDTNDSGDPDAQAFAAYLAYLYSYWKTPEYAQFLTHPGATLRALRLLQEDTFRRDIIRPQVIEGLAGTGIENEQGGTEANNPGEAEGEQTKGTADQQDGSSKT.

Residues 124 to 160 (GTGIENEQGGTEANNPGEAEGEQTKGTADQQDGSSKT) form a disordered region. Positions 147 to 160 (TKGTADQQDGSSKT) are enriched in polar residues.

This sequence belongs to the Mediator complex subunit 31 family. As to quaternary structure, component of the Mediator complex.

Its subcellular location is the nucleus. Component of the Mediator complex, a coactivator involved in the regulated transcription of nearly all RNA polymerase II-dependent genes. Mediator functions as a bridge to convey information from gene-specific regulatory proteins to the basal RNA polymerase II transcription machinery. Mediator is recruited to promoters by direct interactions with regulatory proteins and serves as a scaffold for the assembly of a functional preinitiation complex with RNA polymerase II and the general transcription factors. This Aspergillus terreus (strain NIH 2624 / FGSC A1156) protein is Mediator of RNA polymerase II transcription subunit 31 (soh1).